Here is a 240-residue protein sequence, read N- to C-terminus: Uridylate kinase (240 aa).

An ATP-binding site is contributed by 13–16 (KASG). Residues 21–26 (GSQGFG) form an involved in allosteric activation by GTP region. Gly55 provides a ligand contact to UMP. ATP contacts are provided by Gly56 and Arg60. Residues Asp75 and 136–143 (TGNPFFTT) each bind UMP. The ATP site is built by Thr163, Gln164, Tyr169, and Asp172.

This sequence belongs to the UMP kinase family. Homohexamer.

It is found in the cytoplasm. The enzyme catalyses UMP + ATP = UDP + ADP. Its pathway is pyrimidine metabolism; CTP biosynthesis via de novo pathway; UDP from UMP (UMPK route): step 1/1. Its activity is regulated as follows. Allosterically activated by GTP. Inhibited by UTP. Catalyzes the reversible phosphorylation of UMP to UDP. This chain is Uridylate kinase, found in Rhizobium meliloti (strain 1021) (Ensifer meliloti).